Consider the following 819-residue polypeptide: Advillin (819 aa).

The core stretch occupies residues 1-731 (MSLSSAFRTV…YEQLKNELGD (731 aa)). One copy of the Gelsolin-like 1 repeat lies at 24–105 (MELVLVPLSA…VQYHESDTFR (82 aa)). Phosphotyrosine is present on tyrosine 85. A 1,2-diacyl-sn-glycero-3-phospho-(1D-myo-inositol-4,5-bisphosphate) contacts are provided by residues 109–116 (KRGIIYKK) and 135–143 (RLLHVKGKR). 5 Gelsolin-like repeats span residues 144-215 (NIRA…KEAA), 265-339 (TEVA…SAMF), 407-486 (LVPV…RHFM), 524-592 (NTKA…PEFW), and 631-704 (TEVT…PPTF). Positions 628 to 819 (FLVTEVTDFT…LQLKKEAGLF (192 aa)) are required for interaction with F-actin. A headpiece region spans residues 731–819 (DATAIVRITT…LQLKKEAGLF (89 aa)). Residues 753 to 819 (ESGPKYYPVE…LQLKKEAGLF (67 aa)) form the HP domain. Tyrosine 758 carries the post-translational modification Phosphotyrosine.

It belongs to the villin/gelsolin family. As to quaternary structure, associates (via C-terminus) with actin. Interacts with F-actin. Interacts with SCARF1; the interaction occurs in embryonic dorsal root ganglions at 18 dpc and induces neurite-like outgrowth. Interacts with PLCE1. Interacts with ACTR2 and ACTR3; associates with the ARP2/3 complex. Expressed in dorsal root ganglion (DRG) neurons and superior cervical ganglia (SCG). Expressed in podocytes.

The protein localises to the cytoplasm. Its subcellular location is the cytoskeleton. The protein resides in the cell projection. It localises to the neuron projection. It is found in the axon. The protein localises to the lamellipodium. Its subcellular location is the cell junction. The protein resides in the focal adhesion. Its function is as follows. Ca(2+)-regulated actin-binding protein which plays an important role in actin bundling. May have a unique function in the morphogenesis of neuronal cells which form ganglia. Required for SREC1-mediated regulation of neurite-like outgrowth. Plays a role in regenerative sensory axon outgrowth and remodeling processes after peripheral injury in neonates. Involved in the formation of long fine actin-containing filopodia-like structures in fibroblast. Plays a role in ciliogenesis. In podocytes, controls lamellipodia formation through the regulation of EGF-induced diacylglycerol generation by PLCE1 and ARP2/3 complex assembly. This Rattus norvegicus (Rat) protein is Advillin.